Consider the following 944-residue polypeptide: Protein translocase subunit SecA (944 aa).

ATP contacts are provided by residues glutamine 87, 105–109 (GEGKT), and aspartate 494. A disordered region spans residues 894 to 944 (HAAAAGDGEEKPRPKQETVVRTQPKVGRNDPCPCGSGKKYKKCHGATEAAV). Over residues 901-911 (GEEKPRPKQET) the composition is skewed to basic and acidic residues. Zn(2+) is bound by residues cysteine 925, cysteine 927, cysteine 936, and histidine 937.

The protein belongs to the SecA family. As to quaternary structure, monomer and homodimer. Part of the essential Sec protein translocation apparatus which comprises SecA, SecYEG and auxiliary proteins SecDF-YajC and YidC. Zn(2+) is required as a cofactor.

It localises to the cell inner membrane. It is found in the cytoplasm. It catalyses the reaction ATP + H2O + cellular proteinSide 1 = ADP + phosphate + cellular proteinSide 2.. Functionally, part of the Sec protein translocase complex. Interacts with the SecYEG preprotein conducting channel. Has a central role in coupling the hydrolysis of ATP to the transfer of proteins into and across the cell membrane, serving as an ATP-driven molecular motor driving the stepwise translocation of polypeptide chains across the membrane. This chain is Protein translocase subunit SecA, found in Anaeromyxobacter sp. (strain Fw109-5).